Consider the following 182-residue polypeptide: Type-1 fimbrial protein, A chain (182 aa).

An N-terminal signal peptide occupies residues 1–23 (MKIKTLAIVVLSALSLSSTAALA). A disulfide bridge links Cys44 with Cys84.

The protein belongs to the fimbrial protein family.

The protein resides in the fimbrium. In terms of biological role, fimbriae (also called pili), polar filaments radiating from the surface of the bacterium to a length of 0.5-1.5 micrometers and numbering 100-300 per cell, enable bacteria to colonize the epithelium of specific host organs. In Escherichia coli (strain K12), this protein is Type-1 fimbrial protein, A chain (fimA).